The chain runs to 430 residues: Tol-Pal system protein TolB (430 aa).

Positions Met-1–Ala-21 are cleaved as a signal peptide.

This sequence belongs to the TolB family. The Tol-Pal system is composed of five core proteins: the inner membrane proteins TolA, TolQ and TolR, the periplasmic protein TolB and the outer membrane protein Pal. They form a network linking the inner and outer membranes and the peptidoglycan layer.

The protein resides in the periplasm. Part of the Tol-Pal system, which plays a role in outer membrane invagination during cell division and is important for maintaining outer membrane integrity. TolB occupies a key intermediary position in the Tol-Pal system because it communicates directly with both membrane-embedded components, Pal in the outer membrane and TolA in the inner membrane. In Yersinia enterocolitica serotype O:8 / biotype 1B (strain NCTC 13174 / 8081), this protein is Tol-Pal system protein TolB.